A 275-amino-acid chain; its full sequence is Fructose permease IID component (275 aa).

The PTS EIID domain maps to 5–274 (KRLTKKEIFS…GILGYWAGFL (270 aa)). The next 5 membrane-spanning stretches (helical) occupy residues 100–120 (MKIG…WGTI), 127–147 (LGAS…FFLL), 187–207 (ILGL…NIPI), 227–247 (VLDS…VAWM), and 255–275 (LLII…GFLA).

The protein localises to the cell membrane. The phosphoenolpyruvate-dependent sugar phosphotransferase system (PTS), a major carbohydrate active -transport system, catalyzes the phosphorylation of incoming sugar substrates concomitant with their translocation across the cell membrane. This system is involved in fructose transport. This Bacillus subtilis (strain 168) protein is Fructose permease IID component (levG).